The sequence spans 295 residues: Elongation factor Ts (295 aa).

The involved in Mg(2+) ion dislocation from EF-Tu stretch occupies residues 79-82; sequence TDFV.

Belongs to the EF-Ts family.

The protein resides in the cytoplasm. In terms of biological role, associates with the EF-Tu.GDP complex and induces the exchange of GDP to GTP. It remains bound to the aminoacyl-tRNA.EF-Tu.GTP complex up to the GTP hydrolysis stage on the ribosome. This Bacillus cereus (strain ATCC 10987 / NRS 248) protein is Elongation factor Ts.